We begin with the raw amino-acid sequence, 396 residues long: Elongation factor Tu (396 aa).

Residues K10–E205 enclose the tr-type G domain. Residues G19–T26 form a G1 region. G19–T26 serves as a coordination point for GTP. T26 contacts Mg(2+). The segment at G62–N66 is G2. The interval D83 to G86 is G3. GTP is bound by residues D83–H87 and N138–D141. The segment at N138–D141 is G4. The tract at residues S175 to L177 is G5.

Belongs to the TRAFAC class translation factor GTPase superfamily. Classic translation factor GTPase family. EF-Tu/EF-1A subfamily. Monomer.

The protein localises to the cytoplasm. The catalysed reaction is GTP + H2O = GDP + phosphate + H(+). GTP hydrolase that promotes the GTP-dependent binding of aminoacyl-tRNA to the A-site of ribosomes during protein biosynthesis. The protein is Elongation factor Tu of Corynebacterium aurimucosum (strain ATCC 700975 / DSM 44827 / CIP 107346 / CN-1) (Corynebacterium nigricans).